The sequence spans 277 residues: Large ribosomal subunit protein uL2 (277 aa).

Composition is skewed to basic residues over residues 210 to 219 and 259 to 277; these read RARWAGKRPQ and TRSK…RNKK. Positions 210–277 are disordered; it reads RARWAGKRPQ…KFIVRSRNKK (68 aa).

The protein belongs to the universal ribosomal protein uL2 family. In terms of assembly, part of the 50S ribosomal subunit. Forms a bridge to the 30S subunit in the 70S ribosome.

Functionally, one of the primary rRNA binding proteins. Required for association of the 30S and 50S subunits to form the 70S ribosome, for tRNA binding and peptide bond formation. It has been suggested to have peptidyltransferase activity; this is somewhat controversial. Makes several contacts with the 16S rRNA in the 70S ribosome. The chain is Large ribosomal subunit protein uL2 from Ligilactobacillus salivarius (strain UCC118) (Lactobacillus salivarius).